Consider the following 381-residue polypeptide: Chymosin (381 aa).

Residues 1-16 form the signal peptide; it reads MRCLVVLLAVFALSQG. A propeptide spans 17–58 (activation peptide); the sequence is AEITRIPLYKGKSLRKALKEHGLLEDFLQKQQYGISSKYSGF. The region spanning 74–378 is the Peptidase A1 domain; the sequence is YFGKIYLGTP…DRANNLVGLA (305 aa). Residue Asp-92 is part of the active site. Disulfide bonds link Cys-105-Cys-110 and Cys-265-Cys-269. Residue Asp-274 is part of the active site. Cysteines 308 and 341 form a disulfide.

The protein belongs to the peptidase A1 family. Monomer.

The catalysed reaction is Broad specificity similar to that of pepsin A. Clots milk by cleavage of a single 104-Ser-Phe-|-Met-Ala-107 bond in kappa-chain of casein.. Functionally, chymosin is synthesized in the mucosa of the abomasum (fourth stomach) of young (unweaned) ruminants. The enzyme hydrolyzes casein to paracasein. This chain is Chymosin (CYM), found in Bos taurus (Bovine).